Here is a 332-residue protein sequence, read N- to C-terminus: MQAILEHLYQGGRISREQSQQLFGAIIQGQLAPEQLAAALISMKVRGEYSEEIAGAASALLADASPFPRPDYTFADIVGTGGDGSNSINISTASAIVAAGCGARVAKHGNRSVSSCSGSSDLLAAFGIRLDMPAALSRQALDELGICFLFAPQYHSGFSHAMPVRQLLKTCTLFNVLGPLINPARPPLALIGVYSPELVLPIAETLRVLGYQRAAVVHGGDMDEVALHAPTHVAELREGTIENYTLNAADFGLSAQPAEALRGGSPEENRDILARLLQGKGEHAHESAVAANVALLLKLFGQENLRDNTHRALEEIHSGAPYARVMALAARG.

Residues Gly-79, Gly-82–Asp-83, Ser-87, Asn-89–Thr-92, Lys-107–Ser-115, and Ser-119 each bind 5-phospho-alpha-D-ribose 1-diphosphate. Residue Gly-79 participates in anthranilate binding. Ser-91 is a Mg(2+) binding site. Asn-110 contributes to the anthranilate binding site. Residue Arg-165 coordinates anthranilate. Asp-223 and Glu-224 together coordinate Mg(2+).

The protein belongs to the anthranilate phosphoribosyltransferase family. In terms of assembly, homodimer. The cofactor is Mg(2+).

The enzyme catalyses N-(5-phospho-beta-D-ribosyl)anthranilate + diphosphate = 5-phospho-alpha-D-ribose 1-diphosphate + anthranilate. It functions in the pathway amino-acid biosynthesis; L-tryptophan biosynthesis; L-tryptophan from chorismate: step 2/5. Catalyzes the transfer of the phosphoribosyl group of 5-phosphorylribose-1-pyrophosphate (PRPP) to anthranilate to yield N-(5'-phosphoribosyl)-anthranilate (PRA). The protein is Anthranilate phosphoribosyltransferase of Sodalis glossinidius (strain morsitans).